A 119-amino-acid chain; its full sequence is Protein TusC (119 aa).

Belongs to the DsrF/TusC family. In terms of assembly, heterohexamer, formed by a dimer of trimers. The hexameric TusBCD complex contains 2 copies each of TusB, TusC and TusD. The TusBCD complex interacts with TusE.

It localises to the cytoplasm. Its function is as follows. Part of a sulfur-relay system required for 2-thiolation of 5-methylaminomethyl-2-thiouridine (mnm(5)s(2)U) at tRNA wobble positions. This chain is Protein TusC, found in Buchnera aphidicola subsp. Acyrthosiphon pisum (strain 5A).